A 415-amino-acid polypeptide reads, in one-letter code: rRNA methyltransferase 3, mitochondrial (415 aa).

Residues 1–47 constitute a mitochondrion transit peptide; that stretch reads MAALCRGTVRACILKPLGLSVSLQVKRNVRALRRTPVRVLPAAEKGR. The segment at 41–73 is disordered; the sequence is PAAEKGRERKEVEARRPQQPRQSEYQTRTSQGV. The span at 44–56 shows a compositional bias: basic and acidic residues; that stretch reads EKGRERKEVEARR. The segment covering 59–73 has biased composition (polar residues); it reads QPRQSEYQTRTSQGV. S-adenosyl-L-methionine-binding residues include G357, I381, and L390.

It belongs to the class IV-like SAM-binding methyltransferase superfamily. RNA methyltransferase TrmH family.

The protein resides in the mitochondrion. The enzyme catalyses a uridine in rRNA + S-adenosyl-L-methionine = a 2'-O-methyluridine in rRNA + S-adenosyl-L-homocysteine + H(+). S-adenosyl-L-methionine-dependent 2'-O-ribose methyltransferase that catalyzes the formation of 2'-O-methylguanosine at position 1370 (Gm1370) in the mitochondrial large subunit ribosomal RNA (mtLSU rRNA), a conserved modification in the peptidyl transferase domain of the mtLSU rRNA. Also required for formation of 2'-O-methyluridine at position 1369 (Um1369) mediated by MRM2. The sequence is that of rRNA methyltransferase 3, mitochondrial from Xenopus tropicalis (Western clawed frog).